Reading from the N-terminus, the 999-residue chain is Sarcoplasmic/endoplasmic reticulum calcium ATPase 3 (999 aa).

Residue Met-1 is modified to N-acetylmethionine. At 1–48 (MEEAHLLSAADVLRRFSVTAEGGLSLEQVTDARERYGPNELPTEEGKS) the chain is on the cytoplasmic side. Ser-17 carries the phosphoserine modification. Thr-19 carries the phosphothreonine modification. Ser-25 bears the Phosphoserine mark. A helical transmembrane segment spans residues 49 to 69 (LWELVVEQFEDLLVRILLLAA). Residues 70-89 (LVSFVLAWFEEGEETTTAFV) are Lumenal-facing. Residues 90-110 (EPLVIMLILVANAIVGVWQER) form a helical membrane-spanning segment. The Cytoplasmic portion of the chain corresponds to 111-253 (NAESAIEALK…PERTPLQRKL (143 aa)). A helical membrane pass occupies residues 254 to 273 (DEFGRQLSHAISVICVAVWV). Residues 274–295 (INIGHFADPAHGGSWLRGAVYY) lie on the Lumenal side of the membrane. Residues 296 to 313 (FKIAVALAVAAIPEGLPA) traverse the membrane as a helical segment. Ca(2+)-binding residues include Val-304, Ala-305, Ile-307, and Glu-309. At 314–757 (VITTCLALGT…EEGRAIYNNM (444 aa)) the chain is on the cytoplasmic side. The active-site 4-aspartylphosphate intermediate is the Asp-351. Asp-351 and Thr-353 together coordinate Mg(2+). Residue Thr-353 coordinates ATP. The tract at residues 370 to 400 (AEAEAGTCRLHEFTISGTTYTPEGEVRQGEQ) is interaction with phospholamban 1. Thr-415 is subject to Phosphothreonine. Residues Glu-442, Arg-489, Lys-515, Arg-560, Thr-625, Gly-626, and Asp-627 each coordinate ATP. Ser-662 is modified (phosphoserine). 2 residues coordinate ATP: Arg-678 and Lys-684. Asp-703 contributes to the Mg(2+) binding site. Asn-706 is an ATP binding site. Residues 758–777 (KQFIRYLISSNVGEVVCIFL) traverse the membrane as a helical segment. Residues Asn-768 and Glu-771 each coordinate Ca(2+). Residues 778–787 (TAILGLPEAL) are Lumenal-facing. A helical membrane pass occupies residues 788-808 (IPVQLLWVNLVTDGLPATALG). The segment at 788–808 (IPVQLLWVNLVTDGLPATALG) is interaction with phospholamban 2. Residues Asn-796, Thr-799, and Asp-800 each contribute to the Ca(2+) site. At 809 to 828 (FNPPDLDIMEKPPRNPREAL) the chain is on the cytoplasmic side. The chain crosses the membrane as a helical span at residues 829–851 (ISGWLFFRYLAIGVYVGLATVAA). Over 852–897 (ATWWFLYDTEGPQVTFYQLRNFLKCSEDNPLFAGIDCKVFESRFPT) the chain is Lumenal. A helical transmembrane segment spans residues 898-917 (TMALSVLVTIEMCNALNSVS). A Ca(2+)-binding site is contributed by Glu-908. Topologically, residues 918-930 (ENQSLLRMPPWLN) are cytoplasmic. Residues 931 to 949 (PWLLGAVVMSMALHFLILL) form a helical membrane-spanning segment. Residues 950 to 964 (VPPLPLIFQVTPLSG) are Lumenal-facing. The chain crosses the membrane as a helical span at residues 965–985 (RQWGVVLQMSLPVILLDEALK). The Cytoplasmic segment spans residues 986 to 999 (YLSRNHMDEKKDLK).

This sequence belongs to the cation transport ATPase (P-type) (TC 3.A.3) family. Type IIA subfamily. In terms of assembly, interacts with sarcolipin (SLN). Interacts with phospholamban (PLN). Interacts with myoregulin (MRLN). Interacts with DWORF. Interacts with VMP1. Interacts with TUNAR; the interaction occurs at low levels in low glucose conditions and is increased by high glucose levels. It depends on Mg(2+) as a cofactor.

The protein resides in the endoplasmic reticulum membrane. The protein localises to the sarcoplasmic reticulum membrane. The enzyme catalyses Ca(2+)(in) + ATP + H2O = Ca(2+)(out) + ADP + phosphate + H(+). Its activity is regulated as follows. Inhibited by sarcolipin (SLN), phospholamban (PLN) and myoregulin (MRLN). Enhanced by DWORF; DWORF increases activity by displacing sarcolipin (SLN), phospholamban (PLN) and myoregulin (MRLN). Its function is as follows. This magnesium-dependent enzyme catalyzes the hydrolysis of ATP coupled with the transport of calcium. Transports calcium ions from the cytosol into the sarcoplasmic/endoplasmic reticulum lumen. Contributes to calcium sequestration involved in muscular excitation/contraction. In Mus musculus (Mouse), this protein is Sarcoplasmic/endoplasmic reticulum calcium ATPase 3 (Atp2a3).